The following is a 149-amino-acid chain: Large ribosomal subunit protein bL9 (149 aa).

This sequence belongs to the bacterial ribosomal protein bL9 family.

Binds to the 23S rRNA. This chain is Large ribosomal subunit protein bL9, found in Haemophilus ducreyi (strain 35000HP / ATCC 700724).